The following is a 222-amino-acid chain: Ubiquitin-conjugating enzyme E2 S (222 aa).

The residue at position 1 (Met1) is an N-acetylmethionine. The region spanning 11 to 157 (HIIRLVYKEV…ARLLTEIHGG (147 aa)) is the UBC core domain. Residue Cys95 is the Glycyl thioester intermediate of the active site. Residues 156–222 (GGAGGPSGRA…TDKKRALRRL (67 aa)) form a disordered region. At Ser173 the chain carries Phosphoserine. Residues 208–222 (AAKKKTDKKRALRRL) are compositionally biased toward basic residues.

This sequence belongs to the ubiquitin-conjugating enzyme family. Component of the APC/C complex, composed of at least 14 distinct subunits that assemble into a complex of at least 19 chains with a combined molecular mass of around 1.2 MDa. Within this complex, directly interacts with ANAPC2 and ANAPC4. Interacts with CDC20, FZR1/CDH1 and VHL. Post-translationally, autoubiquitinated by the APC/C complex during G1, leading to its degradation by the proteasome.

It carries out the reaction S-ubiquitinyl-[E1 ubiquitin-activating enzyme]-L-cysteine + [E2 ubiquitin-conjugating enzyme]-L-cysteine = [E1 ubiquitin-activating enzyme]-L-cysteine + S-ubiquitinyl-[E2 ubiquitin-conjugating enzyme]-L-cysteine.. It participates in protein modification; protein ubiquitination. Accepts ubiquitin from the E1 complex and catalyzes its covalent attachment to other proteins. Catalyzes 'Lys-11'-linked polyubiquitination. Acts as an essential factor of the anaphase promoting complex/cyclosome (APC/C), a cell cycle-regulated ubiquitin ligase that controls progression through mitosis. Acts by specifically elongating 'Lys-11'-linked polyubiquitin chains initiated by the E2 enzyme UBE2C/UBCH10 on APC/C substrates, enhancing the degradation of APC/C substrates by the proteasome and promoting mitotic exit. Also acts by elongating ubiquitin chains initiated by the E2 enzyme UBE2D1/UBCH5 in vitro; it is however unclear whether UBE2D1/UBCH5 acts as an E2 enzyme for the APC/C in vivo. Also involved in ubiquitination and subsequent degradation of VHL, resulting in an accumulation of HIF1A. In vitro able to promote polyubiquitination using all 7 ubiquitin Lys residues, except 'Lys-48'-linked polyubiquitination. This Homo sapiens (Human) protein is Ubiquitin-conjugating enzyme E2 S (UBE2S).